A 1165-amino-acid polypeptide reads, in one-letter code: DNA-directed RNA polymerase subunit beta (1165 aa).

The protein belongs to the RNA polymerase beta chain family. The RNAP catalytic core consists of 2 alpha, 1 beta, 1 beta' and 1 omega subunit. When a sigma factor is associated with the core the holoenzyme is formed, which can initiate transcription.

It carries out the reaction RNA(n) + a ribonucleoside 5'-triphosphate = RNA(n+1) + diphosphate. Functionally, DNA-dependent RNA polymerase catalyzes the transcription of DNA into RNA using the four ribonucleoside triphosphates as substrates. This chain is DNA-directed RNA polymerase subunit beta, found in Corynebacterium glutamicum (strain ATCC 13032 / DSM 20300 / JCM 1318 / BCRC 11384 / CCUG 27702 / LMG 3730 / NBRC 12168 / NCIMB 10025 / NRRL B-2784 / 534).